The sequence spans 124 residues: Large ribosomal subunit protein bL12 (124 aa).

Belongs to the bacterial ribosomal protein bL12 family. In terms of assembly, homodimer. Part of the ribosomal stalk of the 50S ribosomal subunit. Forms a multimeric L10(L12)X complex, where L10 forms an elongated spine to which 2 to 4 L12 dimers bind in a sequential fashion. Binds GTP-bound translation factors.

Functionally, forms part of the ribosomal stalk which helps the ribosome interact with GTP-bound translation factors. Is thus essential for accurate translation. The polypeptide is Large ribosomal subunit protein bL12 (Cupriavidus taiwanensis (strain DSM 17343 / BCRC 17206 / CCUG 44338 / CIP 107171 / LMG 19424 / R1) (Ralstonia taiwanensis (strain LMG 19424))).